The following is a 311-amino-acid chain: MASYASEVKKELTSLEVHPEHAKAELAAFLRMNGVLNLHDHQFSLDITTENPAIARRIFKLIKVAYGIEPLLIVSRKMKLKKNNQYLVRLNRDVQKILENLNIWDPAKGLVTRIPQRIMKSSEGAMSYLRGAFLAGGSVNNPETSRYHLEIYSTYEDHNEDLAKLMNEYFYLNAKMTKRRRGYIVYLKEAAKIGDFLHVVGALNAMLNFEDLRIMRDMRNSVNRLVNCDTANMKKTASASAKQVEDIQLIQKEKGIDSLPEKLQILARFRLAHPELTLKEVADQIPDGPISKSGVNHRFKKLHELAETLKE.

A DNA-binding region (H-T-H motif) is located at residues 277–311 (TLKEVADQIPDGPISKSGVNHRFKKLHELAETLKE).

The protein belongs to the WhiA family.

Functionally, involved in cell division and chromosome segregation. This is Probable cell division protein WhiA from Lactobacillus helveticus (strain DPC 4571).